A 2156-amino-acid chain; its full sequence is MAM and LDL-receptor class A domain-containing protein 1 (2156 aa).

The signal sequence occupies residues 1–31 (MLFFLDRMLAFPMNETFCCLWIACVFNSTLA). At 32-2076 (QQGTESFQCD…FTYAQNNTWT (2045 aa)) the chain is on the vesicular side. The LDL-receptor class A 1 domain occupies 33-68 (QGTESFQCDNGVSLPPDSICDFTDQCGDSSDERHCL). 2 cysteine pairs are disulfide-bonded: Cys40-Cys58 and Cys52-Cys67. MAM domains follow at residues 71-229 (ERCD…GCLP) and 268-427 (QACG…ACGQ). The 39-residue stretch at 433–471 (LCSADEFPCTSGQCIAKESVCDSRQDCSDESDEDPATCS) folds into the LDL-receptor class A 2 domain. Cystine bridges form between Cys434/Cys446, Cys441/Cys459, and Cys453/Cys470. MAM domains follow at residues 474-637 (LTCD…ECEI) and 652-816 (SKCD…NCTL). Asn813 carries N-linked (GlcNAc...) asparagine glycosylation. One can recognise an LDL-receptor class A 3 domain in the interval 822–860 (SCEGLDHFWCRHTRACIEKLRLCDLVDDCGDRTDEVNCA). Cystine bridges form between Cys823-Cys837, Cys831-Cys850, and Cys844-Cys859. The MAM 5 domain occupies 863–1024 (LQCNFETGIC…DDLSFMDCTL (162 aa)). Asn1049 is a glycosylation site (N-linked (GlcNAc...) asparagine). One can recognise an LDL-receptor class A 4 domain in the interval 1049 to 1086 (NCTDNEFICRSDGHCIEKMQKCDFKYDCPDKSDEASCV). 3 cysteine pairs are disulfide-bonded: Cys1050/Cys1063, Cys1057/Cys1076, and Cys1070/Cys1085. The MAM 6 domain occupies 1088–1256 (EVCSFEKRSL…DDISFQDCSP (169 aa)). A glycan (N-linked (GlcNAc...) asparagine) is linked at Asn1199. An LDL-receptor class A 5 domain is found at 1263-1301 (KCTDHEFMCANKHCIAKDKLCDFVNDCADNSDETTFICR). Cystine bridges form between Cys1264/Cys1276, Cys1271/Cys1289, and Cys1283/Cys1300. The MAM 7 domain maps to 1305-1465 (GRCDFEFDLC…DIVLTENCLS (161 aa)). An N-linked (GlcNAc...) asparagine glycan is attached at Asn1414. The LDL-receptor class A 6 domain occupies 1482–1518 (FCPLGYRECHNGKCYRLEQSCNFVDNCGDNTDENECG). 3 cysteine pairs are disulfide-bonded: Cys1483–Cys1495, Cys1490–Cys1508, and Cys1502–Cys1517. The region spanning 1519 to 1676 (SSCTFEKGWC…DDIEFKNCTT (158 aa)) is the MAM 8 domain. The LDL-receptor class A 7 domain occupies 1683-1720 (LCPEITDFLCRDKKCIASHLLCDYKPDCSDRSDEAHCA). Disulfide bonds link Cys1684-Cys1697, Cys1692-Cys1710, and Cys1704-Cys1719. The 166-residue stretch at 1727-1892 (GSCNFETSSG…DISFTPECVT (166 aa)) folds into the MAM 9 domain. 3 LDL-receptor class A domains span residues 1902 to 1939 (PCEADQFSCIYTLQCVPLSGKCDGHEDCIDGSDEMDCP), 1946 to 1982 (LCSNMEFPCSTDECIPSLLLCDGVPDCHFNEDELICS), and 1985 to 2023 (SCSNGALVCASSNSCIPAHQRCDGFADCMDFQLDESSCS). 12 disulfides stabilise this stretch: Cys1903/Cys1916, Cys1910/Cys1929, Cys1923/Cys1938, Cys1947/Cys1959, Cys1954/Cys1972, Cys1966/Cys1981, Cys1986/Cys1999, Cys1993/Cys2012, Cys2006/Cys2022, Cys2025/Cys2036, Cys2030/Cys2045, and Cys2047/Cys2056. The region spanning 2024 to 2057 (ECPLNYCRNGGTCVVEKNGPMCRCRQGWKGNRCH) is the EGF-like domain. A helical transmembrane segment spans residues 2077–2097 (LLGIGLAFLMTHITVAVLCFL). The Cytoplasmic portion of the chain corresponds to 2098–2156 (ANRKVPIRKTEGSGNCAFVNPVYGNWSNPEKTESSVYSFSNPLYGTTSGSLETLSHHLK).

As to quaternary structure, interacts with FGF19. Strongly expressed in the small intestine.

The protein resides in the cytoplasmic vesicle membrane. In terms of biological role, enhances production and/or transport of FGF19 and thus has a role in regulation of bile acid synthesis. The protein is MAM and LDL-receptor class A domain-containing protein 1 of Homo sapiens (Human).